Consider the following 559-residue polypeptide: Pentatricopeptide repeat-containing protein At1g08610 (559 aa).

PPR repeat units follow at residues 103-137 (DEET…NQVP), 138-172 (HFPS…GGVP), 173-207 (DTIT…GSPP), 208-242 (DVIT…GCPP), 243-277 (FMIT…GCYP), 278-312 (DIVT…GLEL), 313-347 (NTVT…SYCP), 348-382 (TVIT…KCLP), 383-417 (DIVT…CCPP), 418-452 (GLIT…GIFP), 453-487 (DDIT…GNGI), 488-522 (RGST…GCKP), and 523-557 (DETI…KLLK).

It belongs to the PPR family. P subfamily.

The chain is Pentatricopeptide repeat-containing protein At1g08610 from Arabidopsis thaliana (Mouse-ear cress).